The sequence spans 107 residues: Ferredoxin 1 (107 aa).

4Fe-4S ferredoxin-type domains follow at residues 2-30 (TFVV…YEGP) and 31-60 (NFLV…SEDE). Cysteine 9 and cysteine 17 together coordinate [3Fe-4S] cluster. Positions 21, 40, 43, and 46 each coordinate [4Fe-4S] cluster. Cysteine 50 lines the [3Fe-4S] cluster pocket.

The cofactor is [4Fe-4S] cluster. Requires [3Fe-4S] cluster as cofactor.

In terms of biological role, ferredoxins are iron-sulfur proteins that transfer electrons in a wide variety of metabolic reactions. This chain is Ferredoxin 1 (fdxA), found in Pseudomonas aeruginosa (strain ATCC 15692 / DSM 22644 / CIP 104116 / JCM 14847 / LMG 12228 / 1C / PRS 101 / PAO1).